A 425-amino-acid polypeptide reads, in one-letter code: Pectate lyase L (425 aa).

The N-terminal stretch at 1–25 (MKYLNCFISTGLAAFFLVNSTSVLA) is a signal peptide. A disulfide bridge connects residues Cys-28 and Cys-114. Asp-209, Asp-233, Asp-234, and Asp-237 together coordinate Ca(2+). Lys-273 functions as the Proton acceptor in the catalytic mechanism. Residues Asn-402, Ser-413, Ala-416, Asp-418, and Glu-423 each contribute to the Ca(2+) site.

It belongs to the polysaccharide lyase 9 family. Ca(2+) serves as cofactor.

The protein localises to the secreted. The catalysed reaction is Eliminative cleavage of (1-&gt;4)-alpha-D-galacturonan to give oligosaccharides with 4-deoxy-alpha-D-galact-4-enuronosyl groups at their non-reducing ends.. Its pathway is glycan metabolism; pectin degradation; 2-dehydro-3-deoxy-D-gluconate from pectin: step 2/5. Functionally, presents an endo-cleaving activity on polygalacturonate or partially methylated pectin. The polypeptide is Pectate lyase L (pelL) (Dickeya chrysanthemi (Pectobacterium chrysanthemi)).